A 252-amino-acid polypeptide reads, in one-letter code: Phosphate import ATP-binding protein PstB (252 aa).

Residues 6–247 (IEVKNLNTYF…PKNKQTENYI (242 aa)) enclose the ABC transporter domain. Residue 38 to 45 (GPSGCGKS) participates in ATP binding.

It belongs to the ABC transporter superfamily. Phosphate importer (TC 3.A.1.7) family. As to quaternary structure, the complex is composed of two ATP-binding proteins (PstB), two transmembrane proteins (PstC and PstA) and a solute-binding protein (PstS).

It localises to the cell membrane. The catalysed reaction is phosphate(out) + ATP + H2O = ADP + 2 phosphate(in) + H(+). Part of the ABC transporter complex PstSACB involved in phosphate import. Responsible for energy coupling to the transport system. The chain is Phosphate import ATP-binding protein PstB from Methanosphaera stadtmanae (strain ATCC 43021 / DSM 3091 / JCM 11832 / MCB-3).